A 249-amino-acid chain; its full sequence is Acetylglutamate kinase (249 aa).

Substrate is bound by residues 42–43 (GG), Arg-64, and Asn-155.

It belongs to the acetylglutamate kinase family. ArgB subfamily.

Its subcellular location is the cytoplasm. The catalysed reaction is N-acetyl-L-glutamate + ATP = N-acetyl-L-glutamyl 5-phosphate + ADP. It functions in the pathway amino-acid biosynthesis; L-arginine biosynthesis; N(2)-acetyl-L-ornithine from L-glutamate: step 2/4. In terms of biological role, catalyzes the ATP-dependent phosphorylation of N-acetyl-L-glutamate. The chain is Acetylglutamate kinase from Endomicrobium trichonymphae.